Reading from the N-terminus, the 286-residue chain is uncharacterized protein (286 aa).

NAD(+) is bound by residues 4-18 (AVIGLGNMGQPIARN) and Thr-95. Lys-171 is an active-site residue. Position 239 (Lys-239) interacts with NAD(+).

Belongs to the HIBADH-related family.

This is an uncharacterized protein from Bacillus subtilis (strain 168).